The chain runs to 482 residues: Adenylyltransferase and sulfurtransferase MOCS3-2 (482 aa).

ATP-binding positions include Gly125, Asp146, 153–157 (NNLHR), Lys170, and 214–215 (DN). Residues Cys255 and Cys258 each contribute to the Zn(2+) site. Catalysis depends on Cys272, which acts as the Glycyl thioester intermediate; for adenylyltransferase activity. Residues Cys330 and Cys333 each contribute to the Zn(2+) site. The region spanning 385–480 (DGEPHLLLDV…WGQDVDPDFP (96 aa)) is the Rhodanese domain. The active-site Cysteine persulfide intermediate; for sulfurtransferase activity is the Cys440.

It in the N-terminal section; belongs to the HesA/MoeB/ThiF family. UBA4 subfamily. Zn(2+) is required as a cofactor.

The protein localises to the cytoplasm. The enzyme catalyses [molybdopterin-synthase sulfur-carrier protein]-C-terminal Gly-Gly + ATP + H(+) = [molybdopterin-synthase sulfur-carrier protein]-C-terminal Gly-Gly-AMP + diphosphate. It carries out the reaction [molybdopterin-synthase sulfur-carrier protein]-C-terminal Gly-Gly-AMP + S-sulfanyl-L-cysteinyl-[cysteine desulfurase] + AH2 = [molybdopterin-synthase sulfur-carrier protein]-C-terminal-Gly-aminoethanethioate + L-cysteinyl-[cysteine desulfurase] + A + AMP + 2 H(+). It participates in tRNA modification; 5-methoxycarbonylmethyl-2-thiouridine-tRNA biosynthesis. It functions in the pathway cofactor biosynthesis; molybdopterin biosynthesis. Functionally, plays a central role in 2-thiolation of mcm(5)S(2)U at tRNA wobble positions of cytosolic tRNA(Lys), tRNA(Glu) and tRNA(Gln). Also essential during biosynthesis of the molybdenum cofactor. Acts by mediating the C-terminal thiocarboxylation of sulfur carriers URM1 and MOCS2A. Its N-terminus first activates URM1 and MOCS2A as acyl-adenylates (-COAMP), then the persulfide sulfur on the catalytic cysteine is transferred to URM1 and MOCS2A to form thiocarboxylation (-COSH) of their C-terminus. The reaction probably involves hydrogen sulfide that is generated from the persulfide intermediate and that acts as a nucleophile towards URM1 and MOCS2A. Subsequently, a transient disulfide bond is formed. Does not use thiosulfate as sulfur donor; NFS1 probably acting as a sulfur donor for thiocarboxylation reactions. The chain is Adenylyltransferase and sulfurtransferase MOCS3-2 from Zea mays (Maize).